A 313-amino-acid polypeptide reads, in one-letter code: Probable myosin light chain kinase DDB_G0292624 (313 aa).

The region spanning 6 to 264 (YELHKEIGKG…AKQALEHPWI (259 aa)) is the Protein kinase domain. Residues 12–20 (IGKGAFSVV) and lysine 35 each bind ATP. Aspartate 125 serves as the catalytic Proton acceptor.

This sequence belongs to the protein kinase superfamily. CAMK Ser/Thr protein kinase family. CaMK subfamily.

The enzyme catalyses L-seryl-[myosin light chain] + ATP = O-phospho-L-seryl-[myosin light chain] + ADP + H(+). It carries out the reaction L-threonyl-[myosin light chain] + ATP = O-phospho-L-threonyl-[myosin light chain] + ADP + H(+). With respect to regulation, does not have a calmodulin-binding domain. Functionally, may phosphorylate a specific serine in the N-terminus of a myosin light chain. This Dictyostelium discoideum (Social amoeba) protein is Probable myosin light chain kinase DDB_G0292624.